The primary structure comprises 438 residues: MESQQLHQNPHSLHGSAYASVTSKEVPSNQDPLAVSASNLPEFDRDSTKVNSQQETTPGTSAVPENHHHVSPQPASVPPPQNGQYQQHGMMTPNKAMASNWAHYQQPSMMTCSHYQTSPAYYQPDPHYPLPQYIPPLSTSSPDPIDSQNQHSEVPQAETKVRNNVLPPHTLTSEENFSTWVKFYIRFLKNSNLGDIIPNDQGEIKSQMTYEEHAYIYNTFQAFAPFHLLPTWVKQILEINYADILTVLCKSVSKMQTNNQELKDWIALANLEYDGSTSADTFEITVSTIIQRLKENNINVSDRLACQLILKGLSGDFKYLRNQYRTKTNMKLSQLFAEIQLIYDENKIMNLNKPSQYKQHSEYKNVSRTSPNTTNTKVTTRNYHRTNSSKPRAAKAHNIATSSKFSRVNNDHINESTVSSQYLSDDNELSLRPATERI.

Composition is skewed to polar residues over residues 1 to 11 (MESQQLHQNPH), 19 to 39 (ASVT…SASN), and 49 to 60 (KVNSQQETTPGT). Disordered stretches follow at residues 1–86 (MESQ…GQYQ), 366–397 (VSRT…AKAH), and 419–438 (SSQY…TERI). Positions 295–397 (ENNINVSDRL…SSKPRAAKAH (103 aa)) are RNA-binding. Residues 369-381 (TSPNTTNTKVTTR) are compositionally biased toward low complexity.

As to quaternary structure, homotrimer.

The protein localises to the cytoplasm. Capsid protein (CA) is the structural component of the virus-like particle (VLP), forming the shell that encapsulates the retrotransposons dimeric RNA genome. The particles are assembled from trimer-clustered units and there are holes in the capsid shells that allow for the diffusion of macromolecules. CA also has nucleocapsid-like chaperone activity, promoting primer tRNA(i)-Met annealing to the multipartite primer-binding site (PBS), dimerization of Ty2 RNA and initiation of reverse transcription. The polypeptide is Transposon Ty2-F Gag polyprotein (TY2A-F) (Saccharomyces cerevisiae (strain ATCC 204508 / S288c) (Baker's yeast)).